A 701-amino-acid chain; its full sequence is Alpha-1,4-glucan:maltose-1-phosphate maltosyltransferase (701 aa).

The interval 286-317 (HRKGRNNSPTAAPTDVGSPWAIGSDEGGHDTV) is disordered. Positions 288, 348, and 383 each coordinate alpha-maltose 1-phosphate. D418 functions as the Nucleophile in the catalytic mechanism. Alpha-maltose 1-phosphate is bound at residue N419. E447 (proton donor) is an active-site residue. 557–558 (KY) contacts alpha-maltose 1-phosphate.

The protein belongs to the glycosyl hydrolase 13 family. GlgE subfamily. As to quaternary structure, homodimer.

The catalysed reaction is alpha-maltose 1-phosphate + [(1-&gt;4)-alpha-D-glucosyl](n) = [(1-&gt;4)-alpha-D-glucosyl](n+2) + phosphate. The protein operates within glycan biosynthesis; glycogen biosynthesis. Functionally, essential maltosyltransferase that uses maltose 1-phosphate (M1P) as the sugar donor to elongate linear or branched alpha-(1-&gt;4)-glucans. Maltooligosaccharides with a degree of polymerization (DP) superior or equal to 4 are efficient acceptors, with DP5 being optimal in the GlgE-catalyzed polymerization with M1P. Is specific for the alpha-anomer of M1P as substrate, since the beta-anomer of M1P gives no activity. Exhibits an alpha-retaining catalytic mechanism. Is also able to catalyze the reverse reaction in vitro, releasing M1P from glycogen in the presence of inorganic phosphate. Also catalyzes disproportionation reactions through maltosyl transfer between maltooligosaccharides. Is involved in a branched alpha-glucan biosynthetic pathway from trehalose, together with TreS, Mak and GlgB. This chain is Alpha-1,4-glucan:maltose-1-phosphate maltosyltransferase (glgE), found in Mycobacterium tuberculosis (strain CDC 1551 / Oshkosh).